The following is a 395-amino-acid chain: Flap endonuclease 1 (395 aa).

Residues 1-108 are N-domain; that stretch reads MGILGLSKLL…DELEMRRQKA (108 aa). Aspartate 34 contacts Mg(2+). Arginine 74 provides a ligand contact to DNA. A Mg(2+)-binding site is contributed by aspartate 90. The interval 116–136 is disordered; it reads EKAKDAGDDEMMEKMSKRTVR. An I-domain region spans residues 126–257; that stretch reads MMEKMSKRTV…QKAWEGIQRY (132 aa). Residues glutamate 162, glutamate 164, aspartate 183, and aspartate 185 each coordinate Mg(2+). A DNA-binding site is contributed by glutamate 162. Residues glycine 235 and aspartate 237 each coordinate DNA. Residue aspartate 237 coordinates Mg(2+). An interaction with PCNA region spans residues 340–348; the sequence is TQGRLDSFF.

This sequence belongs to the XPG/RAD2 endonuclease family. FEN1 subfamily. Interacts with PCNA. Three molecules of FEN1 bind to one PCNA trimer with each molecule binding to one PCNA monomer. PCNA stimulates the nuclease activity without altering cleavage specificity. Mg(2+) serves as cofactor. In terms of processing, phosphorylated. Phosphorylation upon DNA damage induces relocalization to the nuclear plasma.

Its subcellular location is the nucleus. It is found in the nucleolus. It localises to the nucleoplasm. The protein localises to the mitochondrion. In terms of biological role, structure-specific nuclease with 5'-flap endonuclease and 5'-3' exonuclease activities involved in DNA replication and repair. During DNA replication, cleaves the 5'-overhanging flap structure that is generated by displacement synthesis when DNA polymerase encounters the 5'-end of a downstream Okazaki fragment. It enters the flap from the 5'-end and then tracks to cleave the flap base, leaving a nick for ligation. Also involved in the long patch base excision repair (LP-BER) pathway, by cleaving within the apurinic/apyrimidinic (AP) site-terminated flap. Acts as a genome stabilization factor that prevents flaps from equilibrating into structures that lead to duplications and deletions. Also possesses 5'-3' exonuclease activity on nicked or gapped double-stranded DNA, and exhibits RNase H activity. Also involved in replication and repair of rDNA and in repairing mitochondrial DNA. The chain is Flap endonuclease 1 from Leishmania major.